Reading from the N-terminus, the 198-residue chain is dTTP/UTP pyrophosphatase (198 aa).

The active-site Proton acceptor is the D75.

It belongs to the Maf family. YhdE subfamily. Requires a divalent metal cation as cofactor.

The protein resides in the cytoplasm. The enzyme catalyses dTTP + H2O = dTMP + diphosphate + H(+). It carries out the reaction UTP + H2O = UMP + diphosphate + H(+). Its function is as follows. Nucleoside triphosphate pyrophosphatase that hydrolyzes dTTP and UTP. May have a dual role in cell division arrest and in preventing the incorporation of modified nucleotides into cellular nucleic acids. This Wolbachia sp. subsp. Drosophila simulans (strain wRi) protein is dTTP/UTP pyrophosphatase.